Reading from the N-terminus, the 712-residue chain is Effector protein HopM1 (712 aa).

The interval Asp22 to Gly58 is disordered. The segment covering Pro44–Ala57 has biased composition (polar residues).

As to quaternary structure, interacts with the chaperone ShcM. Interacts with host plant BIG5/ATMIN7.

Its subcellular location is the secreted. The protein localises to the host membrane. Functionally, involved in the suppression of basal resistance and promotion of disease symptoms in plants. Mediates the ubiquitination and degradation, via the host proteasome, of a low-abundance immunity-associated protein in Arabidopsis thaliana. May be involved in the inhibition of a host vesicle trafficking pathway. This Pseudomonas syringae pv. tomato (strain ATCC BAA-871 / DC3000) protein is Effector protein HopM1 (hopM1).